The sequence spans 389 residues: PqqA peptide cyclase (389 aa).

Positions 20 to 235 (VGLPLWLLAE…TNEYRARLEA (216 aa)) constitute a Radical SAM core domain. Positions 34, 38, and 41 each coordinate [4Fe-4S] cluster.

The protein belongs to the radical SAM superfamily. PqqE family. Interacts with PqqD. The interaction is necessary for activity of PqqE. Requires [4Fe-4S] cluster as cofactor.

It carries out the reaction [PQQ precursor protein] + S-adenosyl-L-methionine = E-Y cross-linked-[PQQ precursor protein] + 5'-deoxyadenosine + L-methionine + H(+). It functions in the pathway cofactor biosynthesis; pyrroloquinoline quinone biosynthesis. Functionally, catalyzes the cross-linking of a glutamate residue and a tyrosine residue in the PqqA protein as part of the biosynthesis of pyrroloquinoline quinone (PQQ). The protein is PqqA peptide cyclase of Pseudomonas fluorescens (strain ATCC BAA-477 / NRRL B-23932 / Pf-5).